The following is a 317-amino-acid chain: Transaldolase (317 aa).

Residue Lys-126 is the Schiff-base intermediate with substrate of the active site.

Belongs to the transaldolase family. Type 1 subfamily. In terms of assembly, homodimer.

The protein localises to the cytoplasm. The enzyme catalyses D-sedoheptulose 7-phosphate + D-glyceraldehyde 3-phosphate = D-erythrose 4-phosphate + beta-D-fructose 6-phosphate. Its pathway is carbohydrate degradation; pentose phosphate pathway; D-glyceraldehyde 3-phosphate and beta-D-fructose 6-phosphate from D-ribose 5-phosphate and D-xylulose 5-phosphate (non-oxidative stage): step 2/3. In terms of biological role, transaldolase is important for the balance of metabolites in the pentose-phosphate pathway. The sequence is that of Transaldolase from Burkholderia pseudomallei (strain K96243).